The following is a 99-amino-acid chain: Seminal vesicle secretory protein 6 (99 aa).

The first 21 residues, 1–21 (MSPTSFFLLTMLLVLVTETAA), serve as a signal peptide directing secretion.

This sequence belongs to the SVP2/SVP5/SVP6 family. As to expression, testis.

The protein localises to the secreted. It is found in the extracellular space. The polypeptide is Seminal vesicle secretory protein 6 (Svs6) (Mus musculus (Mouse)).